The primary structure comprises 389 residues: Lipid-A-disaccharide synthase (389 aa).

The protein belongs to the LpxB family.

It carries out the reaction a lipid X + a UDP-2-N,3-O-bis[(3R)-3-hydroxyacyl]-alpha-D-glucosamine = a lipid A disaccharide + UDP + H(+). It functions in the pathway bacterial outer membrane biogenesis; LPS lipid A biosynthesis. Its function is as follows. Condensation of UDP-2,3-diacylglucosamine and 2,3-diacylglucosamine-1-phosphate to form lipid A disaccharide, a precursor of lipid A, a phosphorylated glycolipid that anchors the lipopolysaccharide to the outer membrane of the cell. The sequence is that of Lipid-A-disaccharide synthase from Burkholderia multivorans (strain ATCC 17616 / 249).